We begin with the raw amino-acid sequence, 377 residues long: Secreted LysM effector Lys2 (377 aa).

The first 22 residues, 1–22, serve as a signal peptide directing secretion; the sequence is MVRQSIGLIALQLLNLVSVAQA. The segment covering 104–119 has biased composition (low complexity); it reads TSSSTATTTSQKPTAT. A disordered region spans residues 104-124; that stretch reads TSSSTATTTSQKPTATVSPLP. LysM domains lie at 135–182 and 207–253; these read KYYN…YVCV and KYYK…YYCV.

This sequence belongs to the secreted LysM effector family.

Functionally, might have a role in sequestration of chitin oligosaccharides (breakdown products of fungal cell walls that are released during invasion and act as triggers of host immunity) to dampen host defense. The polypeptide is Secreted LysM effector Lys2 (Pochonia chlamydosporia (strain 123) (Metacordyceps chlamydosporia)).